We begin with the raw amino-acid sequence, 428 residues long: Flotillin-2 (428 aa).

S-palmitoyl cysteine attachment occurs at residues Cys-4, Cys-19, and Cys-20.

This sequence belongs to the band 7/mec-2 family. Flotillin subfamily. As to quaternary structure, heterooligomeric complex of flotillins 1 and 2. Post-translationally, palmitoylation may be required for the formation of higher order complexes and for neurite outgrowth in cultured neural stem cells. In terms of tissue distribution, normally expressed in growing retinal exons of newly differentiated ganglion cells at the retinal margin. After optic nerve injury, expressed in all retinal ganglion cells and retinal axons. Also expressed in endothelial cells, spinal cord, larval and adult skin, muscle processes, thymus and gill macrophages.

Its subcellular location is the membrane. It localises to the endosome. Functionally, may play a role in axon growth and regeneration. May be involved in epidermal cell adhesion and epidermal structure and function. The protein is Flotillin-2 (flot2) of Carassius auratus (Goldfish).